The following is a 104-amino-acid chain: Integration host factor subunit beta (104 aa).

It belongs to the bacterial histone-like protein family. Heterodimer of an alpha and a beta chain.

In terms of biological role, this protein is one of the two subunits of integration host factor, a specific DNA-binding protein that functions in genetic recombination as well as in transcriptional and translational control. In Chromobacterium violaceum (strain ATCC 12472 / DSM 30191 / JCM 1249 / CCUG 213 / NBRC 12614 / NCIMB 9131 / NCTC 9757 / MK), this protein is Integration host factor subunit beta.